The primary structure comprises 378 residues: Probable serine/threonine-protein kinase PBL7 (378 aa).

A disordered region spans residues 1–49 (MGWIPCSGKSSGRNKTRRNGDHKLDRKSSDCSVSTSEKSRAKSSLSESK). Residue glycine 2 is the site of N-myristoyl glycine attachment. Over residues 18-29 (RNGDHKLDRKSS) the composition is skewed to basic and acidic residues. The span at 32-47 (SVSTSEKSRAKSSLSE) shows a compositional bias: low complexity. Phosphothreonine is present on threonine 62. Positions 73–350 (FRKECLIGEG…ADVVTALSYL (278 aa)) constitute a Protein kinase domain. ATP is bound by residues 79 to 87 (IGEGGFGRV) and lysine 102. At tyrosine 147 the chain carries Phosphotyrosine. The Proton acceptor role is filled by aspartate 200. A phosphoserine mark is found at serine 204 and serine 234. 2 positions are modified to phosphothreonine: threonine 235 and threonine 240. Tyrosine 248 carries the phosphotyrosine modification.

It belongs to the protein kinase superfamily. Ser/Thr protein kinase family. In terms of assembly, interacts with BSU1 and BSL1. Post-translationally, phosphorylated at Ser-43, Ser-46 and Ser-234. As to expression, widely expressed.

Its subcellular location is the cell membrane. It carries out the reaction L-seryl-[protein] + ATP = O-phospho-L-seryl-[protein] + ADP + H(+). The enzyme catalyses L-threonyl-[protein] + ATP = O-phospho-L-threonyl-[protein] + ADP + H(+). Its function is as follows. Serine/threonine-protein kinase involved in the positive regulation of brassinosteroid (BR) signaling and plant growth. Phosphorylates both BSU1 and BSL1 in vitro. The chain is Probable serine/threonine-protein kinase PBL7 from Arabidopsis thaliana (Mouse-ear cress).